Reading from the N-terminus, the 184-residue chain is Cysteine-rich atrial secretory protein (184 aa).

A signal peptide spans 1–26; the sequence is MATFQAHFFAAVMCVGVLGLSKLCGA. Cystine bridges form between C29-C34, C65-C111, C75-C82, C123-C155, and C135-C144. N74 carries an N-linked (GlcNAc...) asparagine glycan.

In terms of processing, N-glycosylated. As to expression, highly expressed in atrium. Moderately expressed in the pericardium, pulmonary vein, nephridium, arteria anterior, ovotestis and connective tissue. Low expression found in intestine, lung plexus, diaphragm, subesophageal ganglion, ventricle and digestive gland. Very low expression found in columellar retractor, pedal nerves and cerebral ganglion. Not expressed in hemocytes.

It is found in the secreted. The sequence is that of Cysteine-rich atrial secretory protein from Achatina achatina (Giant Ghana snail).